Reading from the N-terminus, the 564-residue chain is Dicarboxylate transporter 2, chloroplastic (564 aa).

Residues 1 to 22 (MESLALLPTLSLSTTTTTSKAT) constitute a chloroplast transit peptide. Residues 35-58 (RRPHLSLSLSSTPKPTLTFSSHSH) are disordered. Positions 39-58 (LSLSLSSTPKPTLTFSSHSH) are enriched in low complexity. The next 12 membrane-spanning stretches (helical) occupy residues 94–114 (GAKL…RFAV), 127–147 (LLAI…PVGA), 166–186 (TAFC…FFFA), 235–255 (AGGI…SLPG), 262–282 (LGTY…ALFL), 307–327 (VFWL…TPLI), 356–376 (VTKN…LWVF), 380–400 (IGVS…LLGV), 415–435 (TLAW…LGIV), 451–471 (LSWP…HYLF), 484–504 (AFLA…LALA), and 538–558 (MGFI…GVWW).

The protein belongs to the SLC13A/DASS transporter (TC 2.A.47) family. DIT1 subfamily. As to expression, expressed in leaves.

It is found in the plastid. The protein resides in the chloroplast inner membrane. Its function is as follows. Glutamate/malate translocator involved with DIT1 in primary ammonia assimilation and in the re-assimilation of ammonia generated by the photorespiratory pathway. Exports the end product of ammonia assimilation, glutamate, from plastids to the cytosol. The precursor for ammonia assimilation, 2-oxoglutarate, is imported from the cytosol by DIT1. The polypeptide is Dicarboxylate transporter 2, chloroplastic (DIT2) (Spinacia oleracea (Spinach)).